The chain runs to 1257 residues: Endochitinase A (1257 aa).

An N-terminal signal peptide occupies residues 1–21; that stretch reads MVFKPLTIAAAIAGLTPFVSA. Residues 28-339 form the GH18 domain; that stretch reads SNVAVYYGQG…DVIKDILVAV (312 aa). The active-site Proton donor is the Glu-175. 3 disordered regions span residues 364-429, 595-980, and 1141-1174; these read TPVA…STPV, TPAA…LAPI, and DALTASPSGSQPAGESSPGQSAPTAPASTAPTTT. A compositionally biased stretch (low complexity) spans 595-696; that stretch reads TPAASSSPAV…STPVRSTSSV (102 aa). Over residues 700 to 715 the composition is skewed to polar residues; sequence KSSSAPVIPKPSSTVI. Low complexity predominate over residues 716–935; it reads ATFTSSSGSL…ASGSGAQDST (220 aa). N-linked (GlcNAc...) asparagine glycosylation is present at Asn-825. Over residues 940–964 the composition is skewed to polar residues; sequence HASTLSPSYSTPLASASGQTGSPTT. Asn-973 carries N-linked (GlcNAc...) asparagine glycosylation. Positions 1145-1154 are enriched in polar residues; sequence ASPSGSQPAG. Over residues 1156 to 1174 the composition is skewed to low complexity; it reads SSPGQSAPTAPASTAPTTT. Residue Gly-1231 is the site of GPI-anchor amidated glycine attachment. A propeptide spans 1232–1257 (removed in mature form); sequence AASRVSRLQHGAGAVSAFALFLLAAI.

This sequence belongs to the glycosyl hydrolase 18 family. Chitinase class III subfamily. In terms of processing, O-glycosylated.

The protein localises to the cell membrane. Its subcellular location is the secreted. The protein resides in the cell wall. It carries out the reaction Random endo-hydrolysis of N-acetyl-beta-D-glucosaminide (1-&gt;4)-beta-linkages in chitin and chitodextrins.. Its function is as follows. GPI-anchored chitinase involved in the degradation of chitin, a component of the cell walls of fungi and exoskeletal elements of some animals (including worms and arthropods). Required to reshape the cell wall at the sites where cell wall remodeling and/or cell wall maturation actively take place such as sites of conidia formation. In Aspergillus niger (strain ATCC MYA-4892 / CBS 513.88 / FGSC A1513), this protein is Endochitinase A (ctcA).